A 155-amino-acid chain; its full sequence is SsrA-binding protein (155 aa).

This sequence belongs to the SmpB family.

Its subcellular location is the cytoplasm. Functionally, required for rescue of stalled ribosomes mediated by trans-translation. Binds to transfer-messenger RNA (tmRNA), required for stable association of tmRNA with ribosomes. tmRNA and SmpB together mimic tRNA shape, replacing the anticodon stem-loop with SmpB. tmRNA is encoded by the ssrA gene; the 2 termini fold to resemble tRNA(Ala) and it encodes a 'tag peptide', a short internal open reading frame. During trans-translation Ala-aminoacylated tmRNA acts like a tRNA, entering the A-site of stalled ribosomes, displacing the stalled mRNA. The ribosome then switches to translate the ORF on the tmRNA; the nascent peptide is terminated with the 'tag peptide' encoded by the tmRNA and targeted for degradation. The ribosome is freed to recommence translation, which seems to be the essential function of trans-translation. The chain is SsrA-binding protein from Halothermothrix orenii (strain H 168 / OCM 544 / DSM 9562).